We begin with the raw amino-acid sequence, 149 residues long: Snake venom vascular endothelial growth factor toxin 2 (149 aa).

A signal peptide spans 1-24 (MAAYLLAVAILFCIQGWPSGTVQG). Glutamine 25 is subject to Pyrrolidone carboxylic acid. 3 cysteine pairs are disulfide-bonded: cysteine 38–cysteine 80, cysteine 69–cysteine 115, and cysteine 73–cysteine 117. Residues 118–149 (RPRSGRVNSGKRKRNPEEGGAESQVPLGLTSF) are disordered.

This sequence belongs to the PDGF/VEGF growth factor family. Snake venom VEGF subfamily. Homodimer; disulfide-linked. Interacts with VEGF receptor-1 (FLT1) with a high affinity, whereas it binds to VEGF receptor-2 (KDR) with a low affinity. Does not bind VEGF receptor-3 (FLT4). As to expression, expressed by the venom gland.

The protein localises to the secreted. Functionally, snake venom VEGFs that may contribute to venom dispersion and prey subjugation by inducing vascular permeability and hypotension. This protein induces an increase in capillary permeability after intradermal injection, as well as a drastic hypotensive effect after intravenous injection. The hypotension is mediated by nitric oxide (NO), which is produced by VEGF-activated endothelium NO synthase. Also induces angiogenesis in vitro. Like other crotalid VEGFs, this protein interacts with VEGF receptor-1 (FLT1) with a high affinity, whereas it binds to VEGF receptor-2 (KDR) with a low affinity. The polypeptide is Snake venom vascular endothelial growth factor toxin 2 (Sistrurus catenatus edwardsii (Desert massasauga)).